Consider the following 234-residue polypeptide: Zinc finger FYVE domain-containing protein 21 (234 aa).

The FYVE-type zinc-finger motif lies at 44–104 (DKECRRCMQC…QCAECALVSL (61 aa)). Positions 50, 53, 66, 69, 74, 77, 96, and 99 each coordinate Zn(2+). The segment at 107 to 234 (AEFYDKQLKV…AKLLYESRDQ (128 aa)) is PH-like.

In terms of assembly, interacts with PTK2/FAK1.

The protein resides in the cell junction. It is found in the focal adhesion. It localises to the cytoplasmic vesicle. Its subcellular location is the endosome. Functionally, plays a role in cell adhesion, and thereby in cell motility which requires repeated formation and disassembly of focal adhesions. Regulates microtubule-induced PTK2/FAK1 dephosphorylation, an event important for focal adhesion disassembly, as well as integrin beta-1/ITGB1 cell surface expression. The protein is Zinc finger FYVE domain-containing protein 21 (ZFYVE21) of Homo sapiens (Human).